We begin with the raw amino-acid sequence, 487 residues long: Probable glycine dehydrogenase (decarboxylating) subunit 2 (487 aa).

Residue Lys-269 is modified to N6-(pyridoxal phosphate)lysine.

It belongs to the GcvP family. C-terminal subunit subfamily. As to quaternary structure, the glycine cleavage system is composed of four proteins: P, T, L and H. In this organism, the P 'protein' is a heterodimer of two subunits. The cofactor is pyridoxal 5'-phosphate.

It catalyses the reaction N(6)-[(R)-lipoyl]-L-lysyl-[glycine-cleavage complex H protein] + glycine + H(+) = N(6)-[(R)-S(8)-aminomethyldihydrolipoyl]-L-lysyl-[glycine-cleavage complex H protein] + CO2. In terms of biological role, the glycine cleavage system catalyzes the degradation of glycine. The P protein binds the alpha-amino group of glycine through its pyridoxal phosphate cofactor; CO(2) is released and the remaining methylamine moiety is then transferred to the lipoamide cofactor of the H protein. The polypeptide is Probable glycine dehydrogenase (decarboxylating) subunit 2 (Prosthecochloris aestuarii (strain DSM 271 / SK 413)).